The following is a 505-amino-acid chain: ATP synthase subunit beta, mitochondrial (505 aa).

Residues 1-31 constitute a mitochondrion transit peptide; sequence MFALRAASKADKNLLPFLGQLSRSHAAKAAK. Residue 183–190 coordinates ATP; that stretch reads GGAGVGKT.

It belongs to the ATPase alpha/beta chains family. As to quaternary structure, F-type ATPases have 2 components, CF(1) - the catalytic core - and CF(0) - the membrane proton channel. CF(1) has five subunits: alpha(3), beta(3), gamma(1), delta(1), epsilon(1). CF(0) has three main subunits: a, b and c.

It is found in the mitochondrion. Its subcellular location is the mitochondrion inner membrane. The catalysed reaction is ATP + H2O + 4 H(+)(in) = ADP + phosphate + 5 H(+)(out). In terms of biological role, mitochondrial membrane ATP synthase (F(1)F(0) ATP synthase or Complex V) produces ATP from ADP in the presence of a proton gradient across the membrane which is generated by electron transport complexes of the respiratory chain. F-type ATPases consist of two structural domains, F(1) - containing the extramembraneous catalytic core, and F(0) - containing the membrane proton channel, linked together by a central stalk and a peripheral stalk. During catalysis, ATP synthesis in the catalytic domain of F(1) is coupled via a rotary mechanism of the central stalk subunits to proton translocation. Subunits alpha and beta form the catalytic core in F(1). Rotation of the central stalk against the surrounding alpha(3)beta(3) subunits leads to hydrolysis of ATP in three separate catalytic sites on the beta subunits. This Drosophila melanogaster (Fruit fly) protein is ATP synthase subunit beta, mitochondrial.